The sequence spans 215 residues: ER lumen protein-retaining receptor B (215 aa).

The next 6 membrane-spanning stretches (helical) occupy residues 6–26, 55–77, 98–118, 120–140, 149–169, and 178–198; these read LAGD…IHTI, FVSL…IVWY, WFLV…FTFL, VLWT…LVLL, LTGQ…LNWI, and FVHW…ADFF.

It belongs to the ERD2 family.

The protein resides in the golgi apparatus membrane. It is found in the endoplasmic reticulum membrane. Its function is as follows. Determines the specificity of the luminal endoplasmic reticulum protein retention system. Required for the retro-transport of calreticulin-3 (CRT3) from the Golgi to the ER. Specifically required for elongation factor Tu receptor (EFR) function in response to the pathogen-associated molecular pattern (PAMP) elf18. The sequence is that of ER lumen protein-retaining receptor B (ERD2B) from Arabidopsis thaliana (Mouse-ear cress).